A 104-amino-acid chain; its full sequence is Flagellar hook-basal body complex protein FliE (104 aa).

This sequence belongs to the FliE family.

The protein resides in the bacterial flagellum basal body. The polypeptide is Flagellar hook-basal body complex protein FliE (Salmonella heidelberg (strain SL476)).